The sequence spans 265 residues: Mlc titration factor A (265 aa).

4 residues coordinate Zn(2+): His-111, His-148, His-152, and Glu-211.

It belongs to the MtfA family. In terms of assembly, interacts with Mlc. It depends on Zn(2+) as a cofactor.

The protein resides in the cytoplasm. In terms of biological role, involved in the modulation of the activity of the glucose-phosphotransferase system (glucose-PTS). Interacts with the transcriptional repressor Mlc, preventing its interaction with DNA and leading to the modulation of expression of genes regulated by Mlc, including ptsG, which encodes the PTS system glucose-specific EIICB component. Functionally, shows zinc-dependent metallopeptidase activity. This is Mlc titration factor A from Salmonella paratyphi A (strain AKU_12601).